A 311-amino-acid polypeptide reads, in one-letter code: HPr kinase/phosphorylase (311 aa).

Catalysis depends on residues histidine 138 and lysine 159. ATP is bound at residue 153–160 (GKSGVGKS). Serine 160 contacts Mg(2+). Aspartate 177 serves as the catalytic Proton acceptor; for phosphorylation activity. Proton donor; for dephosphorylation activity. Residues 201-210 (LEIRGLGIIN) are important for the catalytic mechanism of both phosphorylation and dephosphorylation. Glutamate 202 serves as a coordination point for Mg(2+). The active site involves arginine 243. An important for the catalytic mechanism of dephosphorylation region spans residues 264–269 (PVRPGR).

The protein belongs to the HPrK/P family. As to quaternary structure, homohexamer. Mg(2+) is required as a cofactor.

It catalyses the reaction [HPr protein]-L-serine + ATP = [HPr protein]-O-phospho-L-serine + ADP + H(+). The catalysed reaction is [HPr protein]-O-phospho-L-serine + phosphate + H(+) = [HPr protein]-L-serine + diphosphate. Functionally, catalyzes the ATP- as well as the pyrophosphate-dependent phosphorylation of a specific serine residue in HPr, a phosphocarrier protein of the phosphoenolpyruvate-dependent sugar phosphotransferase system (PTS). HprK/P also catalyzes the pyrophosphate-producing, inorganic phosphate-dependent dephosphorylation (phosphorolysis) of seryl-phosphorylated HPr (P-Ser-HPr). The two antagonistic activities of HprK/P are regulated by several intracellular metabolites, which change their concentration in response to the absence or presence of rapidly metabolisable carbon sources (glucose, fructose, etc.) in the growth medium. Also phosphorylates/dephosphorylates the HPr-like catabolite repression protein crh on a specific serine residue. Therefore, by controlling the phosphorylation state of HPr and crh, HPrK/P is a sensor enzyme that plays a major role in the regulation of carbon metabolism and sugar transport: it mediates carbon catabolite repression (CCR), and regulates PTS-catalyzed carbohydrate uptake and inducer exclusion. The sequence is that of HPr kinase/phosphorylase from Geobacillus sp. (strain WCH70).